Reading from the N-terminus, the 74-residue chain is Small ribosomal subunit protein bS21 (74 aa).

Belongs to the bacterial ribosomal protein bS21 family.

The chain is Small ribosomal subunit protein bS21 from Coxiella burnetii (strain Dugway 5J108-111).